The sequence spans 100 residues: NADH-quinone oxidoreductase subunit K 2 (100 aa).

The next 3 membrane-spanning stretches (helical) occupy residues 4–24, 29–49, and 60–80; these read LNNY…GVLV, IVIF…FIAF, and IFVF…LALM.

Belongs to the complex I subunit 4L family. In terms of assembly, NDH-1 is composed of 14 different subunits. Subunits NuoA, H, J, K, L, M, N constitute the membrane sector of the complex.

The protein resides in the cell inner membrane. It catalyses the reaction a quinone + NADH + 5 H(+)(in) = a quinol + NAD(+) + 4 H(+)(out). NDH-1 shuttles electrons from NADH, via FMN and iron-sulfur (Fe-S) centers, to quinones in the respiratory chain. The immediate electron acceptor for the enzyme in this species is believed to be ubiquinone. Couples the redox reaction to proton translocation (for every two electrons transferred, four hydrogen ions are translocated across the cytoplasmic membrane), and thus conserves the redox energy in a proton gradient. The sequence is that of NADH-quinone oxidoreductase subunit K 2 from Geotalea uraniireducens (strain Rf4) (Geobacter uraniireducens).